Here is a 295-residue protein sequence, read N- to C-terminus: Protease HtpX (295 aa).

2 helical membrane passes run 4 to 24 (ILLF…TLSL) and 41 to 61 (SSLL…SLFI). Position 147 (His147) interacts with Zn(2+). Residue Glu148 is part of the active site. Residue His151 participates in Zn(2+) binding. The next 2 helical transmembrane spans lie at 158-178 (VTLA…ARII) and 199-219 (VATI…VMWF). Glu224 is a Zn(2+) binding site.

Belongs to the peptidase M48B family. It depends on Zn(2+) as a cofactor.

It localises to the cell inner membrane. The protein is Protease HtpX of Pseudomonas putida (strain ATCC 47054 / DSM 6125 / CFBP 8728 / NCIMB 11950 / KT2440).